Here is a 383-residue protein sequence, read N- to C-terminus: Pheromone-regulated membrane protein 10 (383 aa).

Topologically, residues 1–65 are cytoplasmic; the sequence is MIVSFGDATT…ILADTNLYPP (65 aa). Residues 66–86 traverse the membrane as a helical segment; sequence WMCVLLYAFCSAMVTPYAFGG. D87 is a topological domain (extracellular). Residues 88 to 108 traverse the membrane as a helical segment; that stretch reads WVNLAISFFMGLCVGSLQFIL. The Cytoplasmic segment spans residues 109-117; the sequence is SQKSYMYSN. The chain crosses the membrane as a helical span at residues 118–138; sequence VFEISASIVVSFCGRAFGSIP. The Extracellular portion of the chain corresponds to 139–141; the sequence is RSH. Residues 142–162 form a helical membrane-spanning segment; it reads ICFGAVTQGSLALILPGYIIL. The Cytoplasmic segment spans residues 163-180; the sequence is CGALELQSRSLVAGAVRM. Residues 181 to 201 form a helical membrane-spanning segment; it reads FYAIIYSLFLGFGITLGSALF. The Extracellular segment spans residues 202 to 216; the sequence is GWMYHNATNEISCPQ. Residues 217 to 237 traverse the membrane as a helical segment; it reads LISPWFRFLFVPAFTISISLL. Residues 238 to 241 lie on the Cytoplasmic side of the membrane; that stretch reads NQAH. The helical transmembrane segment at 242–262 threads the bilayer; the sequence is ISQLPVMVFISCTGYVVTYWA. Residues 263 to 271 lie on the Extracellular side of the membrane; that stretch reads GKHFANSTE. A helical transmembrane segment spans residues 272–292; sequence FTAALAAFVIGVLGNLYSRIW. Position 293 (K293) is a topological domain, cytoplasmic. A helical membrane pass occupies residues 294 to 314; that stretch reads GLAVSAMLPAIFVQVPSGIAS. Residues 315–352 lie on the Extracellular side of the membrane; that stretch reads QNSLLSGLQSANTIVNANETITTSTSDPSSSMSFGMTM. A helical transmembrane segment spans residues 353–373; it reads IQVCVGISVGLFASSLFVYPF. Residues 374–383 lie on the Cytoplasmic side of the membrane; it reads GKKKTGLFSL.

It belongs to the ThrE exporter (TC 2.A.79) family.

It localises to the membrane. This is Pheromone-regulated membrane protein 10 (PRM10) from Saccharomyces cerevisiae (strain ATCC 204508 / S288c) (Baker's yeast).